The following is a 457-amino-acid chain: Transcription factor PCF7 (457 aa).

The stretch at 58 to 84 (STLHYLLQEKERAQQAHEQLQIYQQQQ) forms a coiled coil. The disordered stretch occupies residues 95 to 119 (RQPASRGPGGGGGGGDGGGSSGEST). The span at 101-115 (GPGGGGGGGDGGGSS) shows a compositional bias: gly residues. One can recognise a TCP domain in the interval 140 to 198 (RKDRHSKVCTARGLRDRRVRLAAHTAIRFYDVQDRLGYDRPSKAVDWLMRNAKAAIDEL). 2 disordered regions span residues 199-231 (PDRAEAPPPPAAASTEQPEATEQATSTSYGFGN) and 263-299 (KSLFPSSSTASGAASAGHDEYRGSPPDLLSRTTSNQQ). Low complexity-rich tracts occupy residues 210–225 (AASTEQPEATEQATST) and 268–278 (SSSTASGAASA).

In terms of assembly, forms homodimers and heterodimers.

The protein localises to the nucleus. Its function is as follows. Transcription activator. Binds the promoter core sequence 5'-GGNCC-3'. This is Transcription factor PCF7 (PCF7) from Oryza sativa subsp. japonica (Rice).